The chain runs to 100 residues: Urease subunit gamma (100 aa).

Belongs to the urease gamma subunit family. In terms of assembly, heterotrimer of UreA (gamma), UreB (beta) and UreC (alpha) subunits. Three heterotrimers associate to form the active enzyme.

The protein localises to the cytoplasm. The catalysed reaction is urea + 2 H2O + H(+) = hydrogencarbonate + 2 NH4(+). The protein operates within nitrogen metabolism; urea degradation; CO(2) and NH(3) from urea (urease route): step 1/1. The polypeptide is Urease subunit gamma (Pseudomonas aeruginosa (strain LESB58)).